The primary structure comprises 323 residues: Leucine-rich repeat-containing protein 46 (323 aa).

4 LRR repeats span residues 49–70, 71–92, 93–114, and 115–135; these read DLET…ERLR, NIHS…ACIT, SLRF…LDLQ, and YLQF…DELP. One can recognise an LRRCT domain in the interval 146-188; sequence NPCTNQDGYRKMVIGALPLLLDLDKQPILERWTSDEEDKSSDE. Thr-178 carries the post-translational modification Phosphothreonine. Residues Ser-179, Ser-185, and Ser-186 each carry the phosphoserine modification. Positions 203–228 form a coiled coil; sequence RGFFKDLEQELHQHQERRQQAALTEH. Positions 252-323 are disordered; the sequence is DCSPAVTEEP…TKSTNKRGTK (72 aa). A compositionally biased stretch (polar residues) spans 269–290; the sequence is ATSSTQMASSSKKQVPRNQKGS. Residues 297-310 show a composition bias toward low complexity; it reads ALAATASKTSLAAA. The residue at position 303 (Ser-303) is a Phosphoserine.

The protein resides in the cell projection. The protein localises to the cilium. It is found in the flagellum. Its function is as follows. Required for normal spermatogenesis and male fertility. Plays an important role in sperm flagellum biogenesis. This is Leucine-rich repeat-containing protein 46 (Lrrc46) from Rattus norvegicus (Rat).